Consider the following 268-residue polypeptide: Single-stranded DNA-binding protein WHY3, chloroplastic (268 aa).

The N-terminal 75 residues, 1-75 (MSQLLSSPPM…KQRFGDSSSS (75 aa)), are a transit peptide targeting the chloroplast. Positions 93–98 (KGKAAL) are required for ssDNA binding. Positions 171 to 185 (KGKGSDEGKVRKVLK) match the Nuclear localization signal motif.

It belongs to the Whirly family. In terms of assembly, homotetramer.

It localises to the plastid. The protein resides in the chloroplast. It is found in the nucleus. Its function is as follows. Single-stranded DNA-binding protein that functions in both chloroplasts and nucleus. In chloroplasts, maintains plastid genome stability by preventing break-induced and short homology-dependent illegitimate recombinations. In the nucleus, is recruited to a distal element upstream of the kinesin KP1 to mediate the transcriptional repression of KP1. Can bind double-stranded DNA in vivo. This Arabidopsis thaliana (Mouse-ear cress) protein is Single-stranded DNA-binding protein WHY3, chloroplastic (WHY3).